We begin with the raw amino-acid sequence, 362 residues long: Alpha-tubulin N-acetyltransferase (362 aa).

An N-acetyltransferase domain is found at 1–177; that stretch reads MQFGCNVAEA…NNFLMLDASI (177 aa). Acetyl-CoA-binding positions include 111–124 and 147–156; these read FYTHETVQRRGIGT and SPKLLAFLSK.

It belongs to the acetyltransferase ATAT1 family.

It carries out the reaction L-lysyl-[alpha-tubulin] + acetyl-CoA = N(6)-acetyl-L-lysyl-[alpha-tubulin] + CoA + H(+). Its function is as follows. Specifically acetylates 'Lys-40' in alpha-tubulin on the lumenal side of microtubules. Promotes microtubule destabilization and accelerates microtubule dynamics; this activity may be independent of acetylation activity. Acetylates alpha-tubulin with a slow enzymatic rate, due to a catalytic site that is not optimized for acetyl transfer. Enters the microtubule through each end and diffuses quickly throughout the lumen of microtubules. Acetylates only long/old microtubules because of its slow acetylation rate since it does not have time to act on dynamically unstable microtubules before the enzyme is released. The polypeptide is Alpha-tubulin N-acetyltransferase (Giardia intestinalis (strain ATCC 50803 / WB clone C6) (Giardia lamblia)).